A 126-amino-acid polypeptide reads, in one-letter code: Late histone H2A.L3 (126 aa).

Residues 1 to 20 (MSGRGKGAGKARAKAKSRSA) are disordered. S2 is modified (N-acetylserine). S2 carries the post-translational modification Phosphoserine. Residues 7-19 (GAGKARAKAKSRS) show a composition bias toward basic residues. Residue Q105 is modified to N5-methylglutamine. A Glycyl lysine isopeptide (Lys-Gly) (interchain with G-Cter in ubiquitin) cross-link involves residue K120.

This sequence belongs to the histone H2A family. In terms of assembly, the nucleosome is a histone octamer containing two molecules each of H2A, H2B, H3 and H4 assembled in one H3-H4 heterotetramer and two H2A-H2B heterodimers. The octamer wraps approximately 147 bp of DNA. Post-translationally, monoubiquitination of Lys-120 gives a specific tag for epigenetic transcriptional repression. Phosphorylation of Ser-2 directly represses transcription.

The protein localises to the nucleus. It localises to the chromosome. Its function is as follows. Core component of nucleosome. Nucleosomes wrap and compact DNA into chromatin, limiting DNA accessibility to the cellular machineries which require DNA as a template. Histones thereby play a central role in transcription regulation, DNA repair, DNA replication and chromosomal stability. DNA accessibility is regulated via a complex set of post-translational modifications of histones, also called histone code, and nucleosome remodeling. The polypeptide is Late histone H2A.L3 (Strongylocentrotus purpuratus (Purple sea urchin)).